The chain runs to 274 residues: Mitogen-activated protein kinase 4 (274 aa).

ATP contacts are provided by residues 1 to 8 (GCGGNGLV) and K23. Residues 1–274 (GCGGNGLVLS…KILTFSPMDR (274 aa)) enclose the Protein kinase domain. Catalysis depends on D123, which acts as the Proton acceptor. Residue S160 is modified to Phosphoserine. The SEG motif motif lies at 160 to 162 (SEG).

It belongs to the protein kinase superfamily. CMGC Ser/Thr protein kinase family. MAP kinase subfamily. Homodimer. Heterodimer with ERK3/MAPK6. Interacts with MAPKAPK5. Mg(2+) is required as a cofactor. Post-translationally, phosphorylated by PAK1, PAK2 and PAK3 in the activation loop resulting in catalytic activation. Phosphorylated by MAPKAPK5 at other sites. As to expression, exclusively detected in the brain, where expression is restricted to the choroid plexus and hippocampus, and to a lesser extent in lung.

Its subcellular location is the cytoplasm. The protein resides in the nucleus. The enzyme catalyses L-seryl-[protein] + ATP = O-phospho-L-seryl-[protein] + ADP + H(+). The catalysed reaction is L-threonyl-[protein] + ATP = O-phospho-L-threonyl-[protein] + ADP + H(+). Activated by phosphorylation in the activation loop. Its function is as follows. Atypical MAPK protein. Phosphorylates microtubule-associated protein 2 (MAP2) and MAPKAPK5. The precise role of the complex formed with MAPKAPK5 is still unclear, but the complex follows a complex set of phosphorylation events: upon interaction with atypical MAPKAPK5, ERK4/MAPK4 is phosphorylated and then mediates phosphorylation and activation of MAPKAPK5, which in turn phosphorylates ERK4/MAPK4. May promote entry in the cell cycle. This Rattus norvegicus (Rat) protein is Mitogen-activated protein kinase 4 (Mapk4).